A 69-amino-acid polypeptide reads, in one-letter code: uncharacterized protein (69 aa).

In terms of assembly, interacts with the RNA polymerase core.

This is an uncharacterized protein from Bacillus subtilis (strain 168).